The chain runs to 218 residues: Small ribosomal subunit protein uS3c (218 aa).

In terms of domain architecture, KH type-2 spans 47–118; that stretch reads VQKNMRTSSG…KLNIAVTRIA (72 aa).

This sequence belongs to the universal ribosomal protein uS3 family. As to quaternary structure, part of the 30S ribosomal subunit.

It localises to the plastid. It is found in the chloroplast. The protein is Small ribosomal subunit protein uS3c (rps3) of Nicotiana tomentosiformis (Tobacco).